A 451-amino-acid chain; its full sequence is Tubulin alpha chain (451 aa).

Q11 serves as a coordination point for GTP. K40 is modified (N6-acetyllysine). GTP-binding residues include E71, G144, T145, T179, N206, and N228. E71 is a binding site for Mg(2+). The active site involves E254.

It belongs to the tubulin family. Dimer of alpha and beta chains. A typical microtubule is a hollow water-filled tube with an outer diameter of 25 nm and an inner diameter of 15 nM. Alpha-beta heterodimers associate head-to-tail to form protofilaments running lengthwise along the microtubule wall with the beta-tubulin subunit facing the microtubule plus end conferring a structural polarity. Microtubules usually have 13 protofilaments but different protofilament numbers can be found in some organisms and specialized cells. Requires Mg(2+) as cofactor. In terms of processing, undergoes a tyrosination/detyrosination cycle, the cyclic removal and re-addition of a C-terminal tyrosine residue by the enzymes tubulin tyrosine carboxypeptidase (TTCP) and tubulin tyrosine ligase (TTL), respectively. Post-translationally, acetylation of alpha chains at Lys-40 stabilizes microtubules and affects affinity and processivity of microtubule motors. This modification has a role in multiple cellular functions, ranging from cell motility, cell cycle progression or cell differentiation to intracellular trafficking and signaling.

The protein resides in the cytoplasm. It localises to the cytoskeleton. It catalyses the reaction GTP + H2O = GDP + phosphate + H(+). In terms of biological role, tubulin is the major constituent of microtubules, a cylinder consisting of laterally associated linear protofilaments composed of alpha- and beta-tubulin heterodimers. Microtubules grow by the addition of GTP-tubulin dimers to the microtubule end, where a stabilizing cap forms. Below the cap, tubulin dimers are in GDP-bound state, owing to GTPase activity of alpha-tubulin. The protein is Tubulin alpha chain of Trypanosoma cruzi.